A 79-amino-acid polypeptide reads, in one-letter code: Sulfur carrier protein TusA (79 aa).

Cys17 acts as the Cysteine persulfide intermediate in catalysis.

This sequence belongs to the sulfur carrier protein TusA family.

The protein localises to the cytoplasm. Its function is as follows. Sulfur carrier protein which probably makes part of a sulfur-relay system. This chain is Sulfur carrier protein TusA, found in Histophilus somni (strain 129Pt) (Haemophilus somnus).